A 362-amino-acid polypeptide reads, in one-letter code: Poly(rC)-binding protein 2 (362 aa).

KH domains follow at residues 13–75 and 97–162; these read TLTI…FAMI and PVTL…VKQI. A Glycyl lysine isopeptide (Lys-Gly) (interchain with G-Cter in SUMO2) cross-link involves residue K115. The residue at position 169 (S169) is a Phosphoserine. Residue K181 forms a Glycyl lysine isopeptide (Lys-Gly) (interchain with G-Cter in SUMO2) linkage. Phosphoserine occurs at positions 185 and 268. Positions 284 to 348 constitute a KH 3 domain; that stretch reads TTSHELTIPN…ASISLAQYLI (65 aa). K319 is covalently cross-linked (Glycyl lysine isopeptide (Lys-Gly) (interchain with G-Cter in SUMO2)). Phosphoserine occurs at positions 361 and 362.

In terms of assembly, identified in a mRNP complex, at least composed of DHX9, DDX3X, ELAVL1, HNRNPU, IGF2BP1, ILF3, PABPC1, PCBP2, PTBP2, STAU1, STAU2, SYNCRIP and YBX1. Interacts with IFIH1 and RNF135. Interacts with MAVS (via C-terminus) and ITCH (via WW domains). Interacts with CGAS; preventing the formation of liquid-like droplets in which CGAS is activated. In terms of processing, phosphorylated. The non-phosphorylated form(s) exhibited the strongest poly(rC)-binding activity.

It localises to the nucleus. Its subcellular location is the cytoplasm. In terms of biological role, single-stranded nucleic acid binding protein that binds preferentially to oligo dC. Major cellular poly(rC)-binding protein. Also binds poly(rU). Acts as a negative regulator of antiviral signaling. Negatively regulates cellular antiviral responses mediated by MAVS signaling. It acts as an adapter between MAVS and the E3 ubiquitin ligase ITCH, therefore triggering MAVS ubiquitination and degradation. Negativeley regulates the cGAS-STING pathway via interaction with CGAS, preventing the formation of liquid-like droplets in which CGAS is activated. Together with PCBP1, required for erythropoiesis, possibly by regulating mRNA splicing. The polypeptide is Poly(rC)-binding protein 2 (Pcbp2) (Mus musculus (Mouse)).